The sequence spans 117 residues: Large ribosomal subunit protein bL20 (117 aa).

The protein belongs to the bacterial ribosomal protein bL20 family.

In terms of biological role, binds directly to 23S ribosomal RNA and is necessary for the in vitro assembly process of the 50S ribosomal subunit. It is not involved in the protein synthesizing functions of that subunit. The sequence is that of Large ribosomal subunit protein bL20 from Leptospira borgpetersenii serovar Hardjo-bovis (strain JB197).